The sequence spans 314 residues: Solute carrier family 25 member 44 (314 aa).

3 Solcar repeats span residues 18-100, 107-210, and 220-302; these read KKFY…TRKF, SNTV…YAEQ, and PHIV…LKKL. 6 consecutive transmembrane segments (helical) span residues 20–42, 71–90, 113–133, 185–201, 222–239, and 278–296; these read FYVFGVAMTMMIRVSVYPFTLIR, TGLYRGFLVNTFTLISGQCY, LVAGGSASLVAQSITVPIDVV, GYVASLLTYIPNSAVWW, IVFQAVSGPLAAATASIL, and LSARIISATPSTIVIVVGY.

It belongs to the mitochondrial carrier (TC 2.A.29) family.

It localises to the mitochondrion membrane. It carries out the reaction L-valine(in) = L-valine(out). It catalyses the reaction L-leucine(in) = L-leucine(out). Mitochondrial solute transporter which transports branched-chain amino acid (BCAA; valine, leucine and isoleucine) into mitochondria in brown adipose tissue (BAT). BAT is involved in BCAA catabolism and actively utilizes BCAA in the mitochondria for thermogenesis. This Homo sapiens (Human) protein is Solute carrier family 25 member 44.